The following is a 370-amino-acid chain: Allatostatins (370 aa).

A signal peptide spans 1–27; that stretch reads MSGPRTCFCLPSALVLVLLSLSTSALG. A propeptide spanning residues 28–65 is cleaved from the precursor; that stretch reads TAPEPSGVHEESPAGGGTDLLPHPEDLSASDNPDLEFV. The disordered stretch occupies residues 29–58; it reads APEPSGVHEESPAGGGTDLLPHPEDLSASD. 4 positions are modified to leucine amide: Leu-73, Leu-94, Leu-105, and Leu-117. Residues 121–151 constitute a propeptide that is removed on maturation; the sequence is DYDYYGEEDEDDQQAIGDEDIEESDVGDLMD. A leucine amide mark is found at Leu-161, Leu-172, Leu-188, Leu-200, Leu-213, and Leu-232. The propeptide occupies 236 to 251; it reads SDDIDFRELEEKFAED. At Leu-264 the chain carries Leucine amide. A propeptide spanning residues 268–345 is cleaved from the precursor; that stretch reads EVEPSELEAV…ITPEEFSRMV (78 aa). Residues 273–298 are disordered; that stretch reads ELEAVRNEEKDNSSVHDKKNNTNDMH. Leu-353 carries the post-translational modification Leucine amide. Ile-364 bears the Isoleucine amide mark. Positions 368–370 are excised as a propeptide; sequence SER.

Belongs to the allatostatin family. Brain, subesophageal ganglion and corpus allatum.

The protein resides in the secreted. Functionally, neuropeptide inhibitors of juvenile hormone synthesis and gut muscle contraction. This chain is Allatostatins, found in Diploptera punctata (Pacific beetle cockroach).